The primary structure comprises 473 residues: Ral-GDS-related protein (473 aa).

The segment at 117-215 (EPNEAKPDDP…NQPSEELPDM (99 aa)) is disordered. Positions 134–157 (ALTMPALEPAPPLLADLGPALEPE) are enriched in low complexity. Pro residues predominate over residues 173–185 (GPAPAPGEGPPPG). Positions 219-471 (PPRLLAEQLT…YKLSCQLEPE (253 aa)) constitute a Ras-GEF domain.

The protein resides in the cytoplasmic vesicle. The chain is Ral-GDS-related protein (RGL4) from Homo sapiens (Human).